A 424-amino-acid chain; its full sequence is Serine--tRNA ligase (424 aa).

Residue 231–233 (TAE) participates in L-serine binding. 262–264 (RSE) provides a ligand contact to ATP. L-serine is bound at residue Glu-285. 349–352 (EISS) is a binding site for ATP. An L-serine-binding site is contributed by Ser-385.

It belongs to the class-II aminoacyl-tRNA synthetase family. Type-1 seryl-tRNA synthetase subfamily. Homodimer. The tRNA molecule binds across the dimer.

It is found in the cytoplasm. It catalyses the reaction tRNA(Ser) + L-serine + ATP = L-seryl-tRNA(Ser) + AMP + diphosphate + H(+). The enzyme catalyses tRNA(Sec) + L-serine + ATP = L-seryl-tRNA(Sec) + AMP + diphosphate + H(+). It participates in aminoacyl-tRNA biosynthesis; selenocysteinyl-tRNA(Sec) biosynthesis; L-seryl-tRNA(Sec) from L-serine and tRNA(Sec): step 1/1. In terms of biological role, catalyzes the attachment of serine to tRNA(Ser). Is also able to aminoacylate tRNA(Sec) with serine, to form the misacylated tRNA L-seryl-tRNA(Sec), which will be further converted into selenocysteinyl-tRNA(Sec). This Bacillus cytotoxicus (strain DSM 22905 / CIP 110041 / 391-98 / NVH 391-98) protein is Serine--tRNA ligase.